A 634-amino-acid chain; its full sequence is Calcium up-regulated protein D (634 aa).

The interval M1–S23 is disordered. Ricin B-type lectin domains are found at residues K27–F146 and P117–N250.

It belongs to the cup family.

It is found in the cytoplasm. Its subcellular location is the membrane. In terms of biological role, may play an important role in stabilizing and/or regulating the cell membrane during Ca(2+) stress or certain stages of development. This is Calcium up-regulated protein D (cupD) from Dictyostelium discoideum (Social amoeba).